A 374-amino-acid chain; its full sequence is Alcohol dehydrogenase 3, mitochondrial (374 aa).

Residues 1–26 (MLRLTSARSIVSPLRKGAFGSIRTLA) constitute a mitochondrion transit peptide. Residues Cys70, His93, Cys124, Cys127, Cys130, Cys138, and Cys180 each contribute to the Zn(2+) site. Residues 204 to 210 (GAAGGLG), Asp228, Lys233, 295 to 297 (VGL), and Arg367 each bind NAD(+).

Belongs to the zinc-containing alcohol dehydrogenase family. In terms of assembly, homotetramer. Zn(2+) is required as a cofactor.

The protein resides in the mitochondrion matrix. It carries out the reaction a primary alcohol + NAD(+) = an aldehyde + NADH + H(+). The enzyme catalyses a secondary alcohol + NAD(+) = a ketone + NADH + H(+). The protein is Alcohol dehydrogenase 3, mitochondrial (ADH3) of Kluyveromyces lactis (strain ATCC 8585 / CBS 2359 / DSM 70799 / NBRC 1267 / NRRL Y-1140 / WM37) (Yeast).